The following is a 69-amino-acid chain: Conotoxin Eb6.20 (69 aa).

Residues 1-17 (VLIIAVLFLTACQLTTA) form the signal peptide. The propeptide occupies 18-41 (ETYSRGRQKHRARRSTDKNSKWTR). 3 cysteine pairs are disulfide-bonded: cysteine 43/cysteine 57, cysteine 50/cysteine 61, and cysteine 56/cysteine 68.

It belongs to the conotoxin O1 superfamily. Expressed by the venom duct.

It localises to the secreted. This chain is Conotoxin Eb6.20 (E1), found in Conus ebraeus (Hebrew cone).